Reading from the N-terminus, the 325-residue chain is Glutarate 2-hydroxylase (325 aa).

The Fe cation site is built by histidine 160, aspartate 162, and histidine 292.

The protein belongs to the glutarate hydroxylase family. Homotetramer. Fe(2+) is required as a cofactor.

It catalyses the reaction glutarate + 2-oxoglutarate + O2 = (S)-2-hydroxyglutarate + succinate + CO2. It functions in the pathway amino-acid degradation. Acts as an alpha-ketoglutarate-dependent dioxygenase catalyzing hydroxylation of glutarate (GA) to L-2-hydroxyglutarate (L2HG). Functions in a L-lysine degradation pathway that proceeds via cadaverine, glutarate and L-2-hydroxyglutarate. The protein is Glutarate 2-hydroxylase of Salmonella typhimurium (strain SL1344).